The chain runs to 534 residues: Glycerol kinase 5 (534 aa).

ATP contacts are provided by Ser33 and Thr34. Positions 103, 280, and 281 each coordinate glycerol. Thr302, Gly345, and Gly445 together coordinate ATP.

The protein belongs to the FGGY kinase family. Expressed predominantly in sebaceous glands.

The protein localises to the cytoplasm. The catalysed reaction is glycerol + ATP = sn-glycerol 3-phosphate + ADP + H(+). Its pathway is polyol metabolism; glycerol degradation via glycerol kinase pathway; sn-glycerol 3-phosphate from glycerol: step 1/1. Its function is as follows. Skin-specific kinase that plays a key role in glycerol metabolism, catalyzing its phosphorylation to produce sn-glycerol 3-phosphate. Involved in skin-specific regulation of sterol regulatory element-binding protein (SREBP) processing and lipid biosynthesis. This is Glycerol kinase 5 (Gk5) from Mus musculus (Mouse).